Consider the following 123-residue polypeptide: Large ribosomal subunit protein uL18 (123 aa).

Belongs to the universal ribosomal protein uL18 family. As to quaternary structure, part of the 50S ribosomal subunit; part of the 5S rRNA/L5/L18/L25 subcomplex. Contacts the 5S and 23S rRNAs.

Functionally, this is one of the proteins that bind and probably mediate the attachment of the 5S RNA into the large ribosomal subunit, where it forms part of the central protuberance. This is Large ribosomal subunit protein uL18 from Protochlamydia amoebophila (strain UWE25).